Consider the following 158-residue polypeptide: SsrA-binding protein (158 aa).

Positions 133–152 (KRQTLREQQDNREAQREMRE) are enriched in basic and acidic residues. Positions 133–158 (KRQTLREQQDNREAQREMRERNRRRG) are disordered.

This sequence belongs to the SmpB family.

It is found in the cytoplasm. Required for rescue of stalled ribosomes mediated by trans-translation. Binds to transfer-messenger RNA (tmRNA), required for stable association of tmRNA with ribosomes. tmRNA and SmpB together mimic tRNA shape, replacing the anticodon stem-loop with SmpB. tmRNA is encoded by the ssrA gene; the 2 termini fold to resemble tRNA(Ala) and it encodes a 'tag peptide', a short internal open reading frame. During trans-translation Ala-aminoacylated tmRNA acts like a tRNA, entering the A-site of stalled ribosomes, displacing the stalled mRNA. The ribosome then switches to translate the ORF on the tmRNA; the nascent peptide is terminated with the 'tag peptide' encoded by the tmRNA and targeted for degradation. The ribosome is freed to recommence translation, which seems to be the essential function of trans-translation. The protein is SsrA-binding protein of Pseudarthrobacter chlorophenolicus (strain ATCC 700700 / DSM 12829 / CIP 107037 / JCM 12360 / KCTC 9906 / NCIMB 13794 / A6) (Arthrobacter chlorophenolicus).